The chain runs to 144 residues: Ribosomal RNA large subunit methyltransferase H (144 aa).

S-adenosyl-L-methionine-binding positions include glycine 92 and 111–116; that span reads LSPMTF.

The protein belongs to the RNA methyltransferase RlmH family. As to quaternary structure, homodimer.

Its subcellular location is the cytoplasm. The catalysed reaction is pseudouridine(1915) in 23S rRNA + S-adenosyl-L-methionine = N(3)-methylpseudouridine(1915) in 23S rRNA + S-adenosyl-L-homocysteine + H(+). Functionally, specifically methylates the pseudouridine at position 1915 (m3Psi1915) in 23S rRNA. The chain is Ribosomal RNA large subunit methyltransferase H from Synechococcus sp. (strain CC9311).